The sequence spans 277 residues: Putative phosphoenolpyruvate synthase regulatory protein (277 aa).

157–164 (GVSRCGKT) is an ADP binding site.

Belongs to the pyruvate, phosphate/water dikinase regulatory protein family. PSRP subfamily.

It catalyses the reaction [pyruvate, water dikinase] + ADP = [pyruvate, water dikinase]-phosphate + AMP + H(+). The catalysed reaction is [pyruvate, water dikinase]-phosphate + phosphate + H(+) = [pyruvate, water dikinase] + diphosphate. In terms of biological role, bifunctional serine/threonine kinase and phosphorylase involved in the regulation of the phosphoenolpyruvate synthase (PEPS) by catalyzing its phosphorylation/dephosphorylation. This is Putative phosphoenolpyruvate synthase regulatory protein from Klebsiella pneumoniae (strain 342).